A 327-amino-acid polypeptide reads, in one-letter code: ATP-dependent 6-phosphofructokinase (327 aa).

Glycine 12 contributes to the ATP binding site. ADP is bound by residues 22 to 26 (RGVVR) and 55 to 60 (RYSVSD). Residues 73-74 (RF) and 103-106 (GDGS) each bind ATP. Residue aspartate 104 coordinates Mg(2+). Residue 127 to 129 (TID) participates in substrate binding. Residue aspartate 129 is the Proton acceptor of the active site. Arginine 156 provides a ligand contact to ADP. Substrate is bound by residues arginine 164 and 171-173 (MGR). ADP is bound by residues 187–189 (GCE), lysine 213, and 215–217 (KKH). Substrate is bound by residues glutamate 224, arginine 245, and 251-254 (HIQR).

Belongs to the phosphofructokinase type A (PFKA) family. ATP-dependent PFK group I subfamily. Prokaryotic clade 'B1' sub-subfamily. As to quaternary structure, homotetramer. Requires Mg(2+) as cofactor.

It is found in the cytoplasm. The enzyme catalyses beta-D-fructose 6-phosphate + ATP = beta-D-fructose 1,6-bisphosphate + ADP + H(+). It functions in the pathway carbohydrate degradation; glycolysis; D-glyceraldehyde 3-phosphate and glycerone phosphate from D-glucose: step 3/4. Allosterically activated by ADP and other diphosphonucleosides, and allosterically inhibited by phosphoenolpyruvate. Its function is as follows. Catalyzes the phosphorylation of D-fructose 6-phosphate to fructose 1,6-bisphosphate by ATP, the first committing step of glycolysis. This Hamiltonella defensa subsp. Acyrthosiphon pisum (strain 5AT) protein is ATP-dependent 6-phosphofructokinase.